The primary structure comprises 337 residues: uncharacterized protein (337 aa).

The span at 42–66 (SHSVSPSPSPSDFSSSSSSSSSSPS) shows a compositional bias: low complexity. The disordered stretch occupies residues 42 to 68 (SHSVSPSPSPSDFSSSSSSSSSSPSTF). The Exonuclease domain maps to 129-304 (FLVIDLEGKV…DDTKNITRVV (176 aa)). Positions 133, 135, and 234 each coordinate Mg(2+). Glutamate 135 serves as the catalytic Proton acceptor. Glutamate 135 contacts AMP. Catalysis depends on histidine 291, which acts as the Proton acceptor. Histidine 291 serves as a coordination point for AMP. Aspartate 296 contributes to the Mg(2+) binding site.

This is an uncharacterized protein from Arabidopsis thaliana (Mouse-ear cress).